The following is a 179-amino-acid chain: ATP synthase subunit delta (179 aa).

It belongs to the ATPase delta chain family. F-type ATPases have 2 components, F(1) - the catalytic core - and F(0) - the membrane proton channel. F(1) has five subunits: alpha(3), beta(3), gamma(1), delta(1), epsilon(1). F(0) has three main subunits: a(1), b(2) and c(10-14). The alpha and beta chains form an alternating ring which encloses part of the gamma chain. F(1) is attached to F(0) by a central stalk formed by the gamma and epsilon chains, while a peripheral stalk is formed by the delta and b chains.

The protein localises to the cell inner membrane. F(1)F(0) ATP synthase produces ATP from ADP in the presence of a proton or sodium gradient. F-type ATPases consist of two structural domains, F(1) containing the extramembraneous catalytic core and F(0) containing the membrane proton channel, linked together by a central stalk and a peripheral stalk. During catalysis, ATP synthesis in the catalytic domain of F(1) is coupled via a rotary mechanism of the central stalk subunits to proton translocation. Its function is as follows. This protein is part of the stalk that links CF(0) to CF(1). It either transmits conformational changes from CF(0) to CF(1) or is implicated in proton conduction. The sequence is that of ATP synthase subunit delta from Bordetella petrii (strain ATCC BAA-461 / DSM 12804 / CCUG 43448).